Reading from the N-terminus, the 977-residue chain is Poly [ADP-ribose] polymerase 1 (977 aa).

PARP-type zinc fingers lie at residues 8–91 and 104–179; these read WKAE…GSAP and CTIE…KKDA. The Zn(2+) site is built by cysteine 20, cysteine 23, histidine 52, cysteine 55, cysteine 116, cysteine 119, histidine 141, and cysteine 144. Disordered stretches follow at residues 177-199 and 218-237; these read KDAP…QNDI and DKGK…DLQE. In terms of domain architecture, PADR1 zinc-binding spans 227 to 365; it reads DSNANSSDLQ…AKKPERVLPP (139 aa). In terms of domain architecture, SAP spans 254-288; the sequence is KKHVSTAELRNMLEANGQDTSGPERHLLDRCADGM. A zinc ribbon region spans residues 291–335; it reads GALGTCPVCSSFLYYHGGQYHCSGYVSEWSKCTYSTTEPVRSKKK. Zn(2+)-binding residues include cysteine 296, cysteine 299, cysteine 312, and cysteine 322. The BRCT domain maps to 381–473; it reads SFLSEGLDKL…RVLPFDLYKV (93 aa). The region spanning 504 to 604 is the WGR domain; sequence TGHILEDGKS…TNFQKQPGKF (101 aa). Residues 626–745 enclose the PARP alpha-helical domain; it reads KSSLPPQLLE…DIEIASKLVG (120 aa). Residues 752-977 form the PARP catalytic domain; it reads ESLDDKYKKL…LLKVRFHHKR (226 aa).

It belongs to the ARTD/PARP family.

It localises to the nucleus. The catalysed reaction is NAD(+) + (ADP-D-ribosyl)n-acceptor = nicotinamide + (ADP-D-ribosyl)n+1-acceptor + H(+).. The enzyme catalyses L-aspartyl-[protein] + NAD(+) = 4-O-(ADP-D-ribosyl)-L-aspartyl-[protein] + nicotinamide. It catalyses the reaction L-glutamyl-[protein] + NAD(+) = 5-O-(ADP-D-ribosyl)-L-glutamyl-[protein] + nicotinamide. In terms of biological role, involved in the base excision repair (BER) pathway, by catalyzing the poly(ADP-ribosyl)ation of a limited number of acceptor proteins involved in chromatin architecture and in DNA metabolism. This modification follows DNA damages and appears as an obligatory step in a detection/signaling pathway leading to the reparation of DNA strand breaks. This is Poly [ADP-ribose] polymerase 1 (PARP1) from Oryza sativa subsp. japonica (Rice).